The sequence spans 993 residues: Serine/threonine-protein phosphatase 6 regulatory ankyrin repeat subunit B (993 aa).

ANK repeat units follow at residues 7-36 (CEQP…DVNA), 40-69 (EKRT…RVNA), 73-102 (MWLT…DVNA), 106-135 (NWQT…SVNV), 139-168 (GGRT…NINA), 172-201 (KDRR…EVTC), 205-234 (KGYT…EIDE), 238-267 (YGNT…NVNQ), 271-301 (SGFT…DVNI), 305-334 (DGKS…EIDC), 338-367 (DGNT…DTAK), 371-400 (HSMF…EIDT), 404-433 (FGRT…DFHK), 437-466 (CGRT…NVNE), 470-498 (WGRT…DNSE), 531-561 (EGYN…GFEE), 566-595 (ALKS…DLDI), 599-628 (KGRT…SIFV), 633-662 (TKRT…NPEV), 669-698 (KGQT…NVDA), 702-731 (VGCT…SILC), 735-764 (RGRT…SEED), 771-800 (QGYT…FRKF), 803-832 (NPFT…PSIV), 838-867 (KGRT…QVNA), 871-901 (SGKT…DLTV), 905-934 (DLNT…DESL), and 941-970 (ALQT…CVLA). The tract at residues 974-993 (NASRSNGPRSPPGTAVRKEE) is disordered.

Protein phosphatase 6 (PP6) holoenzyme is proposed to be a heterotrimeric complex formed by the catalytic subunit, a SAPS domain-containing subunit (PP6R) and an ankyrin repeat-domain containing regulatory subunit (ARS). Interacts with PPP6R1.

Functionally, putative regulatory subunit of protein phosphatase 6 (PP6) that may be involved in the recognition of phosphoprotein substrates. The polypeptide is Serine/threonine-protein phosphatase 6 regulatory ankyrin repeat subunit B (Ankrd44) (Mus musculus (Mouse)).